A 138-amino-acid polypeptide reads, in one-letter code: Gene 64 protein (138 aa).

This chain is Gene 64 protein (64), found in Mycobacterium (Mycobacteriophage D29).